The sequence spans 201 residues: Nucleoside triphosphate pyrophosphatase (201 aa).

The active-site Proton acceptor is the aspartate 77.

Belongs to the Maf family. Requires a divalent metal cation as cofactor.

It is found in the cytoplasm. It carries out the reaction a ribonucleoside 5'-triphosphate + H2O = a ribonucleoside 5'-phosphate + diphosphate + H(+). It catalyses the reaction a 2'-deoxyribonucleoside 5'-triphosphate + H2O = a 2'-deoxyribonucleoside 5'-phosphate + diphosphate + H(+). Nucleoside triphosphate pyrophosphatase. May have a dual role in cell division arrest and in preventing the incorporation of modified nucleotides into cellular nucleic acids. The polypeptide is Nucleoside triphosphate pyrophosphatase (Rickettsia akari (strain Hartford)).